Reading from the N-terminus, the 344-residue chain is Ubiquitin-associated domain-containing protein 2 (344 aa).

The signal sequence occupies residues 1–35 (MFTSTGSSGLYKAPLSKSLLLVPSALSLLLALLLP). The Extracellular segment spans residues 36 to 91 (HCQKLFVYDLHAVKNDFQIWRLICGRIICLDLKDTFCSSLLIYNFRIFERRYGSRK). A helical transmembrane segment spans residues 92–112 (FASFLLGSWVLSALFDFLLIE). The Cytoplasmic segment spans residues 113 to 125 (AMQYFFGITAASN). The chain crosses the membrane as a helical span at residues 126–146 (LPSGFLAPVFALFVPFYCSIP). Over 147–163 (RVQVAQILGPLSITNKT) the chain is Extracellular. N-linked (GlcNAc...) asparagine glycosylation occurs at N161. A helical transmembrane segment spans residues 164–184 (LIYILGLQLFTSGSYIWIVAI). Residues 185–344 (SGLMSGLCYD…NVATNFLLQH (160 aa)) lie on the Cytoplasmic side of the membrane. In terms of domain architecture, UBA spans 304 to 344 (EVSEEQVARLMEMGFSRGDALEALRASNNDLNVATNFLLQH).

Interacts with FAF2. Interacts with LMBR1L. Interacts with AMFR and VCP.

Its subcellular location is the endoplasmic reticulum membrane. Functionally, restricts trafficking of FAF2 from the endoplasmic reticulum to lipid droplets. In association with LMBR1L and E3 ubiquitin-protein ligase AMFR, negatively regulates the canonical Wnt signaling pathway in the lymphocytes by promoting the ubiquitin-mediated degradation of CTNNB1 and Wnt receptors FZD6 and LRP6. The protein is Ubiquitin-associated domain-containing protein 2 (UBAC2) of Homo sapiens (Human).